Here is a 293-residue protein sequence, read N- to C-terminus: Coatomer subunit epsilon-2 (293 aa).

It belongs to the COPE family. As to quaternary structure, oligomeric complex that consists of at least the alpha, beta, beta', gamma, delta, epsilon and zeta subunits.

Its subcellular location is the cytoplasm. The protein localises to the golgi apparatus membrane. It is found in the cytoplasmic vesicle. The protein resides in the COPI-coated vesicle membrane. In terms of biological role, the coatomer is a cytosolic protein complex that binds to dilysine motifs and reversibly associates with Golgi non-clathrin-coated vesicles, which further mediate biosynthetic protein transport from the ER, via the Golgi up to the trans Golgi network. The coatomer complex is required for budding from Golgi membranes, and is essential for the retrograde Golgi-to-ER transport of dilysine-tagged proteins. This is Coatomer subunit epsilon-2 from Arabidopsis thaliana (Mouse-ear cress).